Reading from the N-terminus, the 1482-residue chain is Cystic fibrosis transmembrane conductance regulator (1482 aa).

Residues 1 to 77 (MQRSPLEKAS…KLINALRRCF (77 aa)) lie on the Cytoplasmic side of the membrane. The helical transmembrane segment at 78 to 98 (FWRFMFYGILLYLGEVTKAVQ) threads the bilayer. The 285-residue stretch at 81–365 (FMFYGILLYL…WAVQTWYDSL (285 aa)) folds into the ABC transmembrane type-1 1 domain. Residues 99 to 122 (PLLLGRIIASYDPDNKVERSIAIY) are Extracellular-facing. Residues 123–146 (LGIGLCLLFIVRTLLLHPAIFGLH) form a helical membrane-spanning segment. Residues 147 to 195 (HIGMQMRIAMFSLIYKKILKLSSRVLDKISIGQLVSLLSNNLNKFDEGL) are Cytoplasmic-facing. The helical transmembrane segment at 196-216 (ALAHFVWIAPLQVTLLMGLLW) threads the bilayer. At 217–222 (ELLQAS) the chain is on the extracellular side. A helical membrane pass occupies residues 223–243 (AFCGLGFLIVLALVQAGLGRM). At 244–298 (MMKYRDQRAGKINERLVITSEMIENIQSVKAYCWEEAMEKMIENLRQTELKLTRK) the chain is on the cytoplasmic side. A helical membrane pass occupies residues 299 to 319 (AAYVRYFNSSAFFFSGFFVVF). The Extracellular segment spans residues 320–339 (LSVLPYALIKGIILRKIFTT). A helical transmembrane segment spans residues 340–358 (ISFCIVLRMAVTRQFPWAV). At 359-859 (QTWYDSLGAI…YLRYLAVNKS (501 aa)) the chain is on the cytoplasmic side. Residues Trp-401, 458 to 465 (GSTGAGKT), and Gln-493 contribute to the ATP site. In terms of domain architecture, ABC transporter 1 spans 423–646 (NGDNSLFFSN…RPDFSSKLMG (224 aa)). Residue Cys-524 is the site of S-palmitoyl cysteine attachment. Phosphoserine is present on residues Ser-549 and Ser-660. The disordered R region stretch occupies residues 654–832 (SAERRNSILT…EEINEEYLKE (179 aa)). The residue at position 670 (Ser-670) is a Phosphoserine; by PKA. Ser-686 bears the Phosphoserine mark. Residue Lys-688 forms a Glycyl lysine isopeptide (Lys-Gly) (interchain with G-Cter in ubiquitin) linkage. 2 positions are modified to phosphoserine: Ser-700 and Ser-712. Thr-717 carries the phosphothreonine modification. Residues Ser-738, Ser-769, Ser-791, Ser-796, and Ser-814 each carry the phosphoserine modification. A helical membrane pass occupies residues 860 to 880 (LSLVLIWCLVIFLAEVAISLA). In terms of domain architecture, ABC transmembrane type-1 2 spans 860–1156 (LSLVLIWCLV…AVNSSIDVDS (297 aa)). The Extracellular portion of the chain corresponds to 881 to 919 (VLLLLDKSPRYSKGNGTASGNGSSAVIITSTSSYYLFYI). 2 N-linked (GlcNAc...) asparagine glycosylation sites follow: Asn-895 and Asn-901. The discontinuously helical transmembrane segment at 920–940 (YVGVADTLLALGFFRGLPLVH) threads the bilayer. The Cytoplasmic portion of the chain corresponds to 941–991 (TLITVSKILHHRMLHSVLRAPMSTLNMLKAGGILNRFSKDIAILDDLLPLT). The helical transmembrane segment at 992 to 1012 (IFDFVQLLLIVIGAVAVVSVL) threads the bilayer. At 1013 to 1014 (QP) the chain is on the extracellular side. A helical transmembrane segment spans residues 1015 to 1035 (YIFLATVPVIAAFVILRGYFL). The Cytoplasmic portion of the chain corresponds to 1036–1096 (HTSQQLKQLE…TANWFLYLST (61 aa)). Residues 1097 to 1117 (LRWFQMRIEMIFVVFFIAVTF) traverse the membrane as a helical segment. Over 1118-1131 (ISILTTGEGEGTVG) the chain is Extracellular. The helical transmembrane segment at 1132 to 1152 (IILTLAMNIMGTLQWAVNSSI) threads the bilayer. Residues 1153–1482 (DVDSLMRSVS…TEEEVQETRL (330 aa)) lie on the Cytoplasmic side of the membrane. Residues 1212–1445 (MTVKDLTARY…KSLFRQAISP (234 aa)) form the ABC transporter 2 domain. ATP-binding positions include Tyr-1221 and 1246–1253 (GRTGAGKS). Residues 1388–1482 (RTLKQAFADC…TEEEVQETRL (95 aa)) form an interaction with GORASP2 region. Cys-1397 is lipidated: S-palmitoyl cysteine. Residues Ser-1446 and Ser-1458 each carry the phosphoserine modification. Residues 1450–1482 (KLFPRRNSSKHKSRSPITALKEETEEEVQETRL) form a disordered region. The segment covering 1451–1463 (LFPRRNSSKHKSR) has biased composition (basic residues). The span at 1472-1482 (ETEEEVQETRL) shows a compositional bias: acidic residues. A PDZ-binding motif is present at residues 1480–1482 (TRL).

It belongs to the ABC transporter superfamily. ABCC family. CFTR transporter (TC 3.A.1.202) subfamily. Monomer; does not require oligomerization for channel activity. May form oligomers in the membrane. Interacts with SLC26A3, SLC26A6 and NHERF1. Interacts with SHANK2. Interacts with MYO6. Interacts (via C-terminus) with GOPC (via PDZ domain); this promotes CFTR internalization and thereby decreases channel activity. Interacts with SLC4A7 through NHERF1. Found in a complex with MYO5B and RAB11A. Interacts with ANO1. Interacts with SLC26A8. Interacts with AHCYL1; the interaction increases CFTR activity. Interacts with CSE1L. The core-glycosylated form interacts with GORASP2 (via PDZ GRASP-type 1 domain) in respone to ER stress. Interacts with MARCHF2; the interaction leads to CFTR ubiqtuitination and degradation. Interacts with ADGRG2. In terms of processing, N-glycosylated. Post-translationally, phosphorylated; cAMP treatment promotes phosphorylation and activates the channel. Dephosphorylation decreases the ATPase activity (in vitro). Phosphorylation at PKA sites activates the channel. Phosphorylation at PKC sites enhances the response to phosphorylation by PKA. Phosphorylated by AMPK; this inhibits channel activity. Ubiquitinated, leading to its degradation in the lysosome. Deubiquitination by USP10 in early endosomes enhances its endocytic recycling to the cell membrane. Ubiquitinated by RNF185 during ER stress. Ubiquitinated by MARCHF2.

Its subcellular location is the apical cell membrane. The protein localises to the early endosome membrane. It localises to the cell membrane. It is found in the recycling endosome membrane. The protein resides in the endoplasmic reticulum membrane. Its subcellular location is the nucleus. The catalysed reaction is ATP + H2O + closed Cl(-) channel = ADP + phosphate + open Cl(-) channel.. The enzyme catalyses chloride(in) = chloride(out). It catalyses the reaction hydrogencarbonate(in) = hydrogencarbonate(out). It carries out the reaction ATP + H2O = ADP + phosphate + H(+). In terms of biological role, epithelial ion channel that plays an important role in the regulation of epithelial ion and water transport and fluid homeostasis. Mediates the transport of chloride ions across the cell membrane. Possesses an intrinsic ATPase activity and utilizes ATP to gate its channel; the passive flow of anions through the channel is gated by cycles of ATP binding and hydrolysis by the ATP-binding domains. The ion channel is also permeable to HCO(3)(-); selectivity depends on the extracellular chloride concentration. Exerts its function also by modulating the activity of other ion channels and transporters. Contributes to the regulation of the pH and the ion content of the epithelial fluid layer. Modulates the activity of the epithelial sodium channel (ENaC) complex, in part by regulating the cell surface expression of the ENaC complex. May regulate bicarbonate secretion and salvage in epithelial cells by regulating the transporter SLC4A7. Can inhibit the chloride channel activity of ANO1. Plays a role in the chloride and bicarbonate homeostasis during sperm epididymal maturation and capacitation. This chain is Cystic fibrosis transmembrane conductance regulator, found in Otolemur garnettii (Small-eared galago).